The chain runs to 60 residues: Large ribosomal subunit protein bL32 (60 aa).

This sequence belongs to the bacterial ribosomal protein bL32 family.

The sequence is that of Large ribosomal subunit protein bL32 from Borrelia duttonii (strain Ly).